A 296-amino-acid polypeptide reads, in one-letter code: Pre-mRNA-splicing factor CWC23 (296 aa).

Residues 14–86 (DLYKLLELNY…AKKAEYDQWV (73 aa)) enclose the J domain.

This sequence belongs to the DnaJ family. Associated with the spliceosome.

The protein resides in the cytoplasm. The protein localises to the nucleus. Its function is as follows. Involved in pre-mRNA splicing. May be involved in endoplasmic reticulum-associated protein degradation (ERAD) and required for growth at low and high temperatures. This is Pre-mRNA-splicing factor CWC23 (CWC23) from Candida glabrata (strain ATCC 2001 / BCRC 20586 / JCM 3761 / NBRC 0622 / NRRL Y-65 / CBS 138) (Yeast).